Consider the following 157-residue polypeptide: uncharacterized protein (157 aa).

The N-acetyltransferase domain maps to 9–154 (LLINYKTLDE…ETNSNAITNE (146 aa)).

This is an uncharacterized protein from Bacillus mycoides (strain KBAB4) (Bacillus weihenstephanensis).